A 197-amino-acid polypeptide reads, in one-letter code: Probable inosine/xanthosine triphosphatase (197 aa).

Substrate is bound at residue 9–14 (TSNPIK). Mg(2+) contacts are provided by D36 and D65.

It belongs to the YjjX NTPase family. In terms of assembly, homodimer. Requires Mg(2+) as cofactor. It depends on Mn(2+) as a cofactor.

It catalyses the reaction XTP + H2O = XDP + phosphate + H(+). The catalysed reaction is ITP + H2O = IDP + phosphate + H(+). Its function is as follows. Phosphatase that hydrolyzes non-canonical purine nucleotides such as XTP and ITP to their respective diphosphate derivatives. Probably excludes non-canonical purines from DNA/RNA precursor pool, thus preventing their incorporation into DNA/RNA and avoiding chromosomal lesions. The polypeptide is Probable inosine/xanthosine triphosphatase (Aeropyrum pernix (strain ATCC 700893 / DSM 11879 / JCM 9820 / NBRC 100138 / K1)).